A 286-amino-acid polypeptide reads, in one-letter code: Acetyl-coenzyme A carboxylase carboxyl transferase subunit beta (286 aa).

Residues 27–286 (LMTKCPKCKL…HSEETNHATI (260 aa)) enclose the CoA carboxyltransferase N-terminal domain. Positions 31, 34, 50, and 52 each coordinate Zn(2+). A C4-type zinc finger spans residues 31 to 52 (CPKCKLIQYTKQLEANLKVCVC).

Belongs to the AccD/PCCB family. Acetyl-CoA carboxylase is a heterohexamer composed of biotin carboxyl carrier protein (AccB), biotin carboxylase (AccC) and two subunits each of ACCase subunit alpha (AccA) and ACCase subunit beta (AccD). Requires Zn(2+) as cofactor.

The protein resides in the cytoplasm. It carries out the reaction N(6)-carboxybiotinyl-L-lysyl-[protein] + acetyl-CoA = N(6)-biotinyl-L-lysyl-[protein] + malonyl-CoA. It functions in the pathway lipid metabolism; malonyl-CoA biosynthesis; malonyl-CoA from acetyl-CoA: step 1/1. Functionally, component of the acetyl coenzyme A carboxylase (ACC) complex. Biotin carboxylase (BC) catalyzes the carboxylation of biotin on its carrier protein (BCCP) and then the CO(2) group is transferred by the transcarboxylase to acetyl-CoA to form malonyl-CoA. This Exiguobacterium sibiricum (strain DSM 17290 / CCUG 55495 / CIP 109462 / JCM 13490 / 255-15) protein is Acetyl-coenzyme A carboxylase carboxyl transferase subunit beta.